The primary structure comprises 601 residues: Protein FREE1 (601 aa).

Residues 1-240 (MQQGDYNSYY…SGEYPAFEDS (240 aa)) form a disordered region. Over residues 21-35 (TPNPNPNPNPSPPAP) the composition is skewed to pro residues. Polar residues-rich tracts occupy residues 63–79 (DYSN…QNSE) and 125–155 (LSSY…QHQT). The span at 161–175 (APPPSSAPAPNPNPA) shows a compositional bias: pro residues. A compositionally biased stretch (low complexity) spans 176 to 197 (PYSSSLYSAPPYSSGGSSIPPS). Residues 214-231 (NRSRSDLGSDLYGKRSDS) are compositionally biased toward basic and acidic residues. S218 is subject to Phosphoserine. The nuclear export signal stretch occupies residues 338–344 (LDGLRML). The FYVE-type zinc finger occupies 455–515 (DEAVSKCTSC…VCDRCMAEVS (61 aa)). 8 residues coordinate Zn(2+): C461, C464, C477, C480, C485, C488, C507, and C510. Residues 527 to 552 (RNVSLQSHEDLARKLQEEMERNRKSS) are a coiled coil. 2 positions are modified to phosphoserine: S530 and S533. Residues 542–561 (QEEMERNRKSSSGLREGSGR) are disordered.

As to quaternary structure, part of the ESCRT-I complex. Interacts with VPS23A and VPS23B, but not with VPS28 or VPS37. Interacts with IRT1. Interacts with SH3P2. Interacts with SH3P3, but not with SH3P1. Interacts (via N-terminus) with PYL4 and PYR3. Interacts (via C-terminus) with SNRK2D/SNRK2.2, SNRK2I/SNRK2.3, ABF4 and ABI5. Interacts with SINAT1, SINAT2, SINAT3 and SINAT4. Interacts with SINAT5. Component of a phosphoinositide 3-kinase (PI3K) complex containing ATG6, SH3P2 and FREE1. Post-translationally, phosphorylated at Ser-530 and Ser-533 by SNRK2D/SNRK2.2 and SNRK2I/SNRK2.3 in response to abscisic acid (ABA). Phosphorylation is necessary for ABA-induced FREE1 nuclear import. In terms of processing, ubiquitinated by SINAT1, SINAT2, SINAT3 and SINAT4 for subsequent proteasomal degradation. As to expression, ubiquitous. Lowest expression in mature seeds.

It is found in the cytoplasm. The protein localises to the prevacuolar compartment membrane. The protein resides in the late endosome. Its subcellular location is the endosome. It localises to the multivesicular body. It is found in the nucleus. Its function is as follows. Endosomal sorting complex required for transport (ESCRT) component regulating multivesicular body (MVB) protein sorting and plant growth. Required for the formation of intra-luminal vesicles (ILVs)in MVBs. Binds to phosphatidylinositol-3-phosphate (PI3P) and ubiquitin. Controls IRT1 recycling to the plasma membrane and impacts the polar delivery of this transporter to the outer plasma membrane domain. Regulates ubiquitin-dependent membrane protein degradation, vacuolar transport, autophagy, and vacuole biogenesis. ESCRT component that binds ubiquitin and regulates vacuolar sorting of proteins. Attenuates abscisic acid (ABA) signaling through RSL1-triggered degradation of the ABA receptors PYR1 and PYL4. Interacts with PYL4 and PYR1, and delivers the ubiquitinated ABA receptors as cargo to the vacuolar degradation pathway. In response to ABA, is phosphorylated by SnRK2 kinases which mediate FREE1 nuclear import. In the nucleus, interacts with the ABA-responsive transcription factors ABF4 and ABI5 to reduce their ability to bind to their cis-regulatory sequences of downstream genes, thus leading to transcriptional inhibition of ABA signaling pathway. Negatively regulates salt stress tolerance via a negative feedback loop involving ABA signaling pathway. The chain is Protein FREE1 from Arabidopsis thaliana (Mouse-ear cress).